Reading from the N-terminus, the 130-residue chain is MAENQHYGTGRRKSSAARVFIKPGSGNIVVNQRSLEVYFGRETARMVVYQPLELLNMMNKFDLYITVKGGGISGQAGAIRHGITRALMAYDESLRPELRKAGFVTRDAREVERKKVGFRKARRRPQFSKR.

This sequence belongs to the universal ribosomal protein uS9 family.

This is Small ribosomal subunit protein uS9 from Hamiltonella defensa subsp. Acyrthosiphon pisum (strain 5AT).